A 541-amino-acid polypeptide reads, in one-letter code: Kinesin light chain 1 (541 aa).

Residues 27-156 are a coiled coil; the sequence is KTKQVIQGLE…HLEFMNQLKK (130 aa). Basic and acidic residues predominate over residues 156–176; it reads KYDDDISPSEDKDSDSSKEPL. The disordered stretch occupies residues 156 to 201; sequence KYDDDISPSEDKDSDSSKEPLDDLFPNDEDEPGQGIQHSDSSAAAA. Position 162 is a phosphoserine (Ser-162). TPR repeat units follow at residues 211 to 244, 253 to 286, 295 to 328, 337 to 370, and 380 to 413; these read LRTLHNLVIQYASQGRYEVAVPSCKQALEDLEKT, ATMLNILALVYRDQNKYKDAANLLNDALAIREKT, AATLNNLAVLYGKRGKYKEAEPLCKRALEIREKV, AKQLNNLALLCQNQGKYEEVEYYYQRALGIYQTK, and AKTKNNLASCYLKQGKFKQAETLYKEILTRAHEA. Tyr-448 carries the post-translational modification Phosphotyrosine. Position 459 is a phosphoserine (Ser-459). Residues 463–496 form a TPR 6 repeat; sequence TTTLKNLGALYRRQGKFEAAETLEEAAMRSRKQG. A disordered region spans residues 493-541; it reads RKQGLDNVHKQRVAEVLNDPESMEKRRSRESLNMDVVKYESGPDGGEEA. Composition is skewed to basic and acidic residues over residues 495-505 and 514-524; these read QGLDNVHKQRV and SMEKRRSRESL. Phosphoserine; by AMPK is present on residues Ser-520 and Ser-523.

Belongs to the kinesin light chain family. As to quaternary structure, oligomeric complex composed of two heavy chains and two light chains. Interacts with SPAG9. Interacts with ATCAY; may link mitochondria to KLC1 and regulate mitochondria localization into neuron projections. Interacts (via TPR repeats) with TOR1A; the interaction associates TOR1A with the kinesin oligomeric complex. Interacts with BORCS5. Interacts with MAPK8IP3/JIP3 and NTRK2/TRKB; interaction with NTRK2/TRKB is mediated by MAPK8IP3/JIP3. Interacts with CLSTN1; phosphorylation at Ser-459 inhibits interaction with CLSTN1. In terms of processing, phosphorylation at Ser-459 by ERK inhibits interaction with CLSTN1 and localization to cytoplasmic vesicles.

Its subcellular location is the cell projection. The protein resides in the growth cone. The protein localises to the cytoplasmic vesicle. It is found in the cytoplasm. It localises to the cytoskeleton. Kinesin is a microtubule-associated force-producing protein that may play a role in organelle transport. The light chain may function in coupling of cargo to the heavy chain or in the modulation of its ATPase activity. The chain is Kinesin light chain 1 (Klc1) from Mus musculus (Mouse).